A 160-amino-acid chain; its full sequence is Ureidoglycolate lyase (160 aa).

The protein belongs to the ureidoglycolate lyase family. Homodimer. The cofactor is Ni(2+).

It catalyses the reaction (S)-ureidoglycolate = urea + glyoxylate. The protein operates within nitrogen metabolism; (S)-allantoin degradation. Functionally, catalyzes the catabolism of the allantoin degradation intermediate (S)-ureidoglycolate, generating urea and glyoxylate. Involved in the anaerobic utilization of allantoin as sole nitrogen source. Reinforces the induction of genes involved in the degradation of allantoin and glyoxylate by producing glyoxylate. The chain is Ureidoglycolate lyase from Escherichia coli (strain K12 / MC4100 / BW2952).